Here is a 729-residue protein sequence, read N- to C-terminus: Fatty acid oxidation complex subunit alpha (729 aa).

Residues 1-189 (MLYQSETLQL…KIGLVDAVVD (189 aa)) form an enoyl-CoA hydratase/isomerase region. Substrate is bound at residue Asp-296. The 3-hydroxyacyl-CoA dehydrogenase stretch occupies residues 311–729 (AAPKLAAVLG…LLDVSTNQPA (419 aa)). NAD(+) is bound by residues Met-324, Asp-343, 400–402 (VVE), Lys-407, and Ser-429. Residue His-450 is the For 3-hydroxyacyl-CoA dehydrogenase activity of the active site. Residue Asn-453 coordinates NAD(+). The substrate site is built by Asn-500 and Tyr-660.

The protein in the N-terminal section; belongs to the enoyl-CoA hydratase/isomerase family. This sequence in the C-terminal section; belongs to the 3-hydroxyacyl-CoA dehydrogenase family. As to quaternary structure, heterotetramer of two alpha chains (FadB) and two beta chains (FadA).

The enzyme catalyses a (3S)-3-hydroxyacyl-CoA + NAD(+) = a 3-oxoacyl-CoA + NADH + H(+). The catalysed reaction is a (3S)-3-hydroxyacyl-CoA = a (2E)-enoyl-CoA + H2O. It catalyses the reaction a 4-saturated-(3S)-3-hydroxyacyl-CoA = a (3E)-enoyl-CoA + H2O. It carries out the reaction (3S)-3-hydroxybutanoyl-CoA = (3R)-3-hydroxybutanoyl-CoA. The enzyme catalyses a (3Z)-enoyl-CoA = a 4-saturated (2E)-enoyl-CoA. The catalysed reaction is a (3E)-enoyl-CoA = a 4-saturated (2E)-enoyl-CoA. It participates in lipid metabolism; fatty acid beta-oxidation. Involved in the aerobic and anaerobic degradation of long-chain fatty acids via beta-oxidation cycle. Catalyzes the formation of 3-oxoacyl-CoA from enoyl-CoA via L-3-hydroxyacyl-CoA. It can also use D-3-hydroxyacyl-CoA and cis-3-enoyl-CoA as substrate. The protein is Fatty acid oxidation complex subunit alpha of Yersinia pseudotuberculosis serotype IB (strain PB1/+).